The following is a 365-amino-acid chain: SWR1 complex subunit 2 (365 aa).

2 disordered regions span residues 43–83 (ALKE…NEKE) and 95–147 (PGKT…EGEK). Over residues 48-74 (EHDDEYEAEREVADEFDSDFNDDEPEP) the composition is skewed to acidic residues. Over residues 99–108 (ASKKKKKKTK) the composition is skewed to basic residues. Residues 118-132 (GDEKPGEELGNKEQE) are compositionally biased toward basic and acidic residues. 2 coiled-coil regions span residues 123–150 (GEEL…KVIR) and 184–225 (GEEK…KAIV). Residues 133–144 (EKEENEAQEDME) are compositionally biased toward acidic residues. The tract at residues 333–365 (RTKIPKSNKSFSLRSSARFLSSESEEESEEDSD) is disordered. A compositionally biased stretch (low complexity) spans 342–354 (SFSLRSSARFLSS). Residues 355 to 365 (ESEEESEEDSD) show a composition bias toward acidic residues.

Belongs to the VPS72/YL1 family. Component of the SWR1 chromatin-remodeling complex composed of at least ARP6/ESD1/SUF3, PIE1, SWC6, SWC2 and H2AZs (HTA8, HTA9, HTA11). Interacts directly with SWC6 and H2AZs, but not with ARP6.

Its function is as follows. Component of the SWR1 complex which mediates the ATP-dependent exchange of histone H2A for the H2A variant H2A.F/Z leading to transcriptional regulation of selected genes (e.g. FLC) by chromatin remodeling. The protein is SWR1 complex subunit 2 (SWC2) of Arabidopsis thaliana (Mouse-ear cress).